The following is a 203-amino-acid chain: Holliday junction branch migration complex subunit RuvA (203 aa).

The segment at 1 to 63 (MIGKLSGKVD…EEHMHLYGFL (63 aa)) is domain I. A domain II region spans residues 64 to 142 (TLEEKIFFNL…KISSGSAIIK (79 aa)). The flexible linker stretch occupies residues 143 to 149 (ESLNIKN). The domain III stretch occupies residues 150–203 (ITPVASNEVIKALVNLGFSRFEAQNAVQGIITQNPEISIDELIKTALKNRNSNF).

Belongs to the RuvA family. In terms of assembly, homotetramer. Forms an RuvA(8)-RuvB(12)-Holliday junction (HJ) complex. HJ DNA is sandwiched between 2 RuvA tetramers; dsDNA enters through RuvA and exits via RuvB. An RuvB hexamer assembles on each DNA strand where it exits the tetramer. Each RuvB hexamer is contacted by two RuvA subunits (via domain III) on 2 adjacent RuvB subunits; this complex drives branch migration. In the full resolvosome a probable DNA-RuvA(4)-RuvB(12)-RuvC(2) complex forms which resolves the HJ.

It localises to the cytoplasm. The RuvA-RuvB-RuvC complex processes Holliday junction (HJ) DNA during genetic recombination and DNA repair, while the RuvA-RuvB complex plays an important role in the rescue of blocked DNA replication forks via replication fork reversal (RFR). RuvA specifically binds to HJ cruciform DNA, conferring on it an open structure. The RuvB hexamer acts as an ATP-dependent pump, pulling dsDNA into and through the RuvAB complex. HJ branch migration allows RuvC to scan DNA until it finds its consensus sequence, where it cleaves and resolves the cruciform DNA. The sequence is that of Holliday junction branch migration complex subunit RuvA from Rickettsia peacockii (strain Rustic).